We begin with the raw amino-acid sequence, 632 residues long: MNSRIFPAAMSAPYAPLQPAVVVHDEQGRLYSAAYGDVYHSRDDAAGQAEHVFLRGNGLPQRWRGRARFTVCETGFGMGLNFLTLWQAWRDDPARPRRLHMLSLEGHPFAREDLLAVLRAHAPAGLQALATQLAAQWPPLLPGLHRLEFEGGALTLTLGFGAAQQLAPRLTARVDAYFLDGFAPRGNPAMWDPHMLQALARLAAPDATLASWCSAGQVRQALQQAGFAVRRAPGFGGKWHMTLGQRLPGVATPDDAPDDDGAPVLVVGAGLAGAAVAHALALRGRAVTVLDAARLAGLASHAGHAAAALTPVIARDDNPRARLSRAGSQRAWLRWRDLPAPAAPRRCGTVQLERDAGRAAALAQTLQILQFPADWVRMVDRDQAGALAGLPVARGGVFFADGMLVRPGALIDALLAGEGISTIAAQAARLRRHGAQWQVLDAQGRQVAQAPVVVLANAADAPRLLADSGLLEPLPRLARMHALAGEVTLLPAEALSGGPRCVVGGEGYLLPAVDGWCVAGSTYVHGAAQALTGAEGQRVNLDKAAGLLGQAPAAFASLQPGSLPGWAGWRAVLPGRLPAAGPLAHAPGLWLAAGYASRGLSWAALMGDVIAARLCGEPGPLETDLLAQIAPR.

Residues 1-247 (MNSRIFPAAM…KWHMTLGQRL (247 aa)) form a tRNA (mnm(5)s(2)U34)-methyltransferase region. The segment at 267-632 (VGAGLAGAAV…TDLLAQIAPR (366 aa)) is FAD-dependent cmnm(5)s(2)U34 oxidoreductase.

It in the N-terminal section; belongs to the methyltransferase superfamily. tRNA (mnm(5)s(2)U34)-methyltransferase family. This sequence in the C-terminal section; belongs to the DAO family. Requires FAD as cofactor.

The protein localises to the cytoplasm. It carries out the reaction 5-aminomethyl-2-thiouridine(34) in tRNA + S-adenosyl-L-methionine = 5-methylaminomethyl-2-thiouridine(34) in tRNA + S-adenosyl-L-homocysteine + H(+). Catalyzes the last two steps in the biosynthesis of 5-methylaminomethyl-2-thiouridine (mnm(5)s(2)U) at the wobble position (U34) in tRNA. Catalyzes the FAD-dependent demodification of cmnm(5)s(2)U34 to nm(5)s(2)U34, followed by the transfer of a methyl group from S-adenosyl-L-methionine to nm(5)s(2)U34, to form mnm(5)s(2)U34. In Bordetella bronchiseptica (strain ATCC BAA-588 / NCTC 13252 / RB50) (Alcaligenes bronchisepticus), this protein is tRNA 5-methylaminomethyl-2-thiouridine biosynthesis bifunctional protein MnmC.